The primary structure comprises 83 residues: Large ribosomal subunit protein bL27 (83 aa).

Positions 1 to 22 are disordered; it reads MAHKKGQGSTRNGRDSHSKRLG.

This sequence belongs to the bacterial ribosomal protein bL27 family.

This Protochlamydia amoebophila (strain UWE25) protein is Large ribosomal subunit protein bL27.